A 394-amino-acid chain; its full sequence is MNKQTIRDVAWSGKRALVRVDFNVPLDQARKVTDDTRIRAALPTINYLLEQGASVILMSHLGRPKKKVAEEFRLKPVADHLQSLLDAPVNYIQTTTGAEAEAAAQALQAGQVLLLENTRFDPREESNDPAMAEELAKLGDIYVNDAFGAAHRAHASTEGLAKFLPAVAGFLMEAELAALGKALDDPQRPFVTIIGGAKISDKIGVIENLLGKVDSLLIGGGMANTFLLAQNKAVGASLVEADSVAEAGRLIDEAQGRGVKLLLPSDVVVADAFSAEANTQVLSIDDVPDGWRILDIGPETRQTYSQVVSEAKTVIWNGPMGVFELEPFAAGTRAVAQALADSSAITIIGGGDSVAAIEQMGLAEKMSHISTGGGASLELLEGKVLPGIAALNDK.

Residues Asp-21–Asn-23, Arg-37, His-60–Arg-63, Arg-119, and Arg-152 contribute to the substrate site. ATP-binding positions include Lys-202, Glu-324, and Gly-350–Ser-353.

It belongs to the phosphoglycerate kinase family. As to quaternary structure, monomer.

It localises to the cytoplasm. It carries out the reaction (2R)-3-phosphoglycerate + ATP = (2R)-3-phospho-glyceroyl phosphate + ADP. It functions in the pathway carbohydrate degradation; glycolysis; pyruvate from D-glyceraldehyde 3-phosphate: step 2/5. The protein is Phosphoglycerate kinase of Herpetosiphon aurantiacus (strain ATCC 23779 / DSM 785 / 114-95).